Consider the following 89-residue polypeptide: Small ribosomal subunit protein uS15 (89 aa).

It belongs to the universal ribosomal protein uS15 family. In terms of assembly, part of the 30S ribosomal subunit. Forms a bridge to the 50S subunit in the 70S ribosome, contacting the 23S rRNA.

Its function is as follows. One of the primary rRNA binding proteins, it binds directly to 16S rRNA where it helps nucleate assembly of the platform of the 30S subunit by binding and bridging several RNA helices of the 16S rRNA. Functionally, forms an intersubunit bridge (bridge B4) with the 23S rRNA of the 50S subunit in the ribosome. In Parvibaculum lavamentivorans (strain DS-1 / DSM 13023 / NCIMB 13966), this protein is Small ribosomal subunit protein uS15.